The primary structure comprises 888 residues: Molybdenum cofactor sulfurase (888 aa).

Ser34 is subject to Phosphoserine. Lys264 carries the N6-(pyridoxal phosphate)lysine modification. Residue Cys424 is part of the active site. A phosphoserine mark is found at Ser528 and Ser530. The MOSC domain maps to 706–867; the sequence is KQSSNSQRNA…LSVGSQVLPV (162 aa).

This sequence belongs to the class-V pyridoxal-phosphate-dependent aminotransferase family. MOCOS subfamily. Pyridoxal 5'-phosphate serves as cofactor.

It catalyses the reaction Mo-molybdopterin + L-cysteine + AH2 = thio-Mo-molybdopterin + L-alanine + A + H2O. It participates in cofactor biosynthesis; molybdopterin biosynthesis. Functionally, sulfurates the molybdenum cofactor. Sulfation of molybdenum is essential for xanthine dehydrogenase (XDH) and aldehyde oxidase (ADO) enzymes in which molybdenum cofactor is liganded by 1 oxygen and 1 sulfur atom in active form. In vitro, the C-terminal domain is able to reduce N-hydroxylated prodrugs, such as benzamidoxime. The polypeptide is Molybdenum cofactor sulfurase (Homo sapiens (Human)).